A 30-amino-acid polypeptide reads, in one-letter code: L-serine dehydratase, alpha chain (30 aa).

The protein belongs to the iron-sulfur dependent L-serine dehydratase family. In terms of assembly, heterodimer of an alpha chain and a beta chain. [4Fe-4S] cluster serves as cofactor.

It catalyses the reaction L-serine = pyruvate + NH4(+). It functions in the pathway carbohydrate biosynthesis; gluconeogenesis. The protein is L-serine dehydratase, alpha chain of Anaerotignum propionicum (Clostridium propionicum).